The chain runs to 645 residues: Putative bifunctional exonuclease/endonuclease protein MT2247 (645 aa).

In terms of domain architecture, Exonuclease spans 44–207 (VVVDLETTGG…DDARATVDVL (164 aa)). Positions 248–326 (HRPGVYLFRG…LSTHAPPYNR (79 aa)) constitute a GIY-YIG domain. The tract at residues 603–645 (WQSDLPTEPHPSREQLFGRTGVDCRTGPPQPLLPGRQPFSTAG) is disordered. The segment covering 635–645 (LPGRQPFSTAG) has biased composition (low complexity).

This is Putative bifunctional exonuclease/endonuclease protein MT2247 from Mycobacterium tuberculosis (strain CDC 1551 / Oshkosh).